The sequence spans 104 residues: Flagellar hook-basal body complex protein FliE (104 aa).

This sequence belongs to the FliE family.

The protein localises to the bacterial flagellum basal body. This is Flagellar hook-basal body complex protein FliE from Salmonella arizonae (strain ATCC BAA-731 / CDC346-86 / RSK2980).